Consider the following 1282-residue polypeptide: Myosin-1 (1282 aa).

A disordered region spans residues methionine 1–valine 30. The Myosin motor domain maps to alanine 44–aspartate 723. Glycine 137 to threonine 144 lines the ATP pocket. Phosphoserine is present on serine 365. Residues valine 412–alanine 494 form an actin-binding region. Residues leucine 569–aspartate 590 are disordered. IQ domains lie at histidine 727–cysteine 747 and alanine 748–glutamine 773. Residues arginine 781 to alanine 977 enclose the TH1 domain. The tract at residues serine 973–glutamate 1073 is disordered. Residues proline 1029–alanine 1058 show a composition bias toward low complexity. The segment covering proline 1059–alanine 1068 has biased composition (pro residues). The SH3 domain maps to proline 1074–glutamine 1135. A disordered region spans residues alanine 1237–arginine 1282. Positions glycine 1252–glycine 1269 are enriched in low complexity.

Belongs to the TRAFAC class myosin-kinesin ATPase superfamily. Myosin family. Phosphorylation of the TEDS site (Ser-365) is required for the polarization of the actin cytoskeleton. Phosphorylation probably activates the myosin-I ATPase activity.

It localises to the cytoplasm. The protein resides in the cytoskeleton. Its subcellular location is the actin patch. Its function is as follows. Type-I myosin implicated in the organization of the actin cytoskeleton. Required for proper actin cytoskeleton polarization. At the cell cortex, assembles in patch-like structures together with proteins from the actin-polymerizing machinery and promotes actin assembly. Functions as actin nucleation-promoting factor (NPF) for the Arp2/3 complex. This is Myosin-1 (myo1) from Mycosarcoma maydis (Corn smut fungus).